Here is a 373-residue protein sequence, read N- to C-terminus: tRNA-specific 2-thiouridylase MnmA (373 aa).

Residues 12 to 19 and M38 each bind ATP; that span reads GMSGGVDS. The tract at residues 98–100 is interaction with target base in tRNA; the sequence is NPD. C103 serves as the catalytic Nucleophile. C103 and C200 form a disulfide bridge. G127 lines the ATP pocket. Positions 150 to 152 are interaction with tRNA; that stretch reads KDQ. Residue C200 is the Cysteine persulfide intermediate of the active site. The segment at 312–313 is interaction with tRNA; sequence RY.

It belongs to the MnmA/TRMU family.

It is found in the cytoplasm. It carries out the reaction S-sulfanyl-L-cysteinyl-[protein] + uridine(34) in tRNA + AH2 + ATP = 2-thiouridine(34) in tRNA + L-cysteinyl-[protein] + A + AMP + diphosphate + H(+). Its function is as follows. Catalyzes the 2-thiolation of uridine at the wobble position (U34) of tRNA, leading to the formation of s(2)U34. The polypeptide is tRNA-specific 2-thiouridylase MnmA (Streptococcus pyogenes serotype M1).